The primary structure comprises 333 residues: Leukocyte cell-derived chemotaxin 1 (333 aa).

The helical transmembrane segment at 42-62 (VGAVVLISGAVLLLFGAIGAF) threads the bilayer. The BRICHOS domain occupies 104 to 201 (GSGAEEAIEV…LCGDLPIFWL (98 aa)). Cysteine 131 and cysteine 193 form a disulfide bridge. Residues 211-214 (RERR) constitute a propeptide that is removed on maturation. The interval 212-269 (ERREVVRKTVPTTTKRPHSGPRGNPGPARMRNDSRPSVQEDSEPFNPDNPYHQEGESM) is disordered. Asparagine 243 carries an N-linked (GlcNAc...) asparagine glycan. 4 disulfides stabilise this stretch: cysteine 281-cysteine 285, cysteine 282-cysteine 322, cysteine 292-cysteine 316, and cysteine 296-cysteine 312.

This sequence belongs to the chondromodulin-1 family. After cleavage, the post-translationally modified ChM-I is secreted as a glycoprotein.

It is found in the secreted. The protein localises to the extracellular space. The protein resides in the extracellular matrix. Its subcellular location is the endomembrane system. Functionally, bifunctional growth regulator that stimulates the growth of cultured chondrocytes in the presence of basic fibroblast growth factor (FGF) but inhibits the growth of cultured vascular endothelial cells. May contribute to the rapid growth of cartilage and vascular invasion prior to the replacement of cartilage by bone during endochondral bone development. Inhibits in vitro tube formation and mobilization of endothelial cells. Plays a role as antiangiogenic factor in cardiac valves to suppress neovascularization. The polypeptide is Leukocyte cell-derived chemotaxin 1 (Oryctolagus cuniculus (Rabbit)).